The following is a 156-amino-acid chain: SsrA-binding protein (156 aa).

The protein belongs to the SmpB family.

The protein resides in the cytoplasm. Functionally, required for rescue of stalled ribosomes mediated by trans-translation. Binds to transfer-messenger RNA (tmRNA), required for stable association of tmRNA with ribosomes. tmRNA and SmpB together mimic tRNA shape, replacing the anticodon stem-loop with SmpB. tmRNA is encoded by the ssrA gene; the 2 termini fold to resemble tRNA(Ala) and it encodes a 'tag peptide', a short internal open reading frame. During trans-translation Ala-aminoacylated tmRNA acts like a tRNA, entering the A-site of stalled ribosomes, displacing the stalled mRNA. The ribosome then switches to translate the ORF on the tmRNA; the nascent peptide is terminated with the 'tag peptide' encoded by the tmRNA and targeted for degradation. The ribosome is freed to recommence translation, which seems to be the essential function of trans-translation. This chain is SsrA-binding protein, found in Thermoanaerobacter pseudethanolicus (strain ATCC 33223 / 39E) (Clostridium thermohydrosulfuricum).